A 26-amino-acid polypeptide reads, in one-letter code: Delta-conotoxin Am2766 (26 aa).

Cystine bridges form between cysteine 1/cysteine 16, cysteine 8/cysteine 20, and cysteine 15/cysteine 24. At glutamate 26 the chain carries Glutamic acid 1-amide.

Expressed by the venom duct.

The protein resides in the secreted. Its function is as follows. Delta-conotoxins bind to site 6 of voltage-gated sodium channels (Nav) and inhibit the inactivation process. The chain is Delta-conotoxin Am2766 from Conus amadis (Amadis cone).